A 669-amino-acid polypeptide reads, in one-letter code: Translation factor GUF1, mitochondrial (669 aa).

Residues M1–Y49 constitute a mitochondrion transit peptide. The 182-residue stretch at E66–K247 folds into the tr-type G domain. Residues A75–S82, D140–H144, and N194–D197 contribute to the GTP site.

The protein belongs to the TRAFAC class translation factor GTPase superfamily. Classic translation factor GTPase family. LepA subfamily.

It localises to the mitochondrion inner membrane. The enzyme catalyses GTP + H2O = GDP + phosphate + H(+). Functionally, promotes mitochondrial protein synthesis. May act as a fidelity factor of the translation reaction, by catalyzing a one-codon backward translocation of tRNAs on improperly translocated ribosomes. Binds to mitochondrial ribosomes in a GTP-dependent manner. The protein is Translation factor GUF1, mitochondrial of Bos taurus (Bovine).